Consider the following 322-residue polypeptide: Gluconeogenesis factor (322 aa).

It belongs to the gluconeogenesis factor family.

The protein resides in the cytoplasm. Functionally, required for morphogenesis under gluconeogenic growth conditions. The protein is Gluconeogenesis factor of Listeria monocytogenes serovar 1/2a (strain ATCC BAA-679 / EGD-e).